A 1464-amino-acid chain; its full sequence is DNA-directed RNA polymerase subunit beta' (1464 aa).

The Zn(2+) site is built by C66, C68, C96, and C99. Mg(2+) is bound by residues D491, D493, and D495. The Zn(2+) site is built by C838, C912, C919, and C922. The span at 1143–1200 (NDDDDDDYYDSDYYDYYDYSDDDDDYDDYDDYYYNYDDDENDNDNDYDYDYDYDYDYD) shows a compositional bias: acidic residues. Residues 1143 to 1229 (NDDDDDDYYD…YDYDYDSDSD (87 aa)) are disordered. The span at 1204–1219 (HNSYSHNSYSPSSNDN) shows a compositional bias: low complexity. A compositionally biased stretch (acidic residues) spans 1220-1229 (YDYDYDSDSD).

Belongs to the RNA polymerase beta' chain family. As to quaternary structure, the RNAP catalytic core consists of 2 alpha, 1 beta, 1 beta' and 1 omega subunit. When a sigma factor is associated with the core the holoenzyme is formed, which can initiate transcription. The cofactor is Mg(2+). It depends on Zn(2+) as a cofactor.

The enzyme catalyses RNA(n) + a ribonucleoside 5'-triphosphate = RNA(n+1) + diphosphate. In terms of biological role, DNA-dependent RNA polymerase catalyzes the transcription of DNA into RNA using the four ribonucleoside triphosphates as substrates. This Karelsulcia muelleri (strain GWSS) (Sulcia muelleri) protein is DNA-directed RNA polymerase subunit beta'.